A 107-amino-acid chain; its full sequence is Basic phospholipase A2 sphenotoxin subunit B (107 aa).

The Ca(2+) site is built by Tyr-27, Gly-29, and Gly-31. Intrachain disulfides connect Cys-28–Cys-44, Cys-43–Cys-91, Cys-50–Cys-88, Cys-57–Cys-81, and Cys-75–Cys-86. His-47 is a catalytic residue. Residue Asp-48 participates in Ca(2+) binding. Asp-89 is a catalytic residue.

Belongs to the phospholipase A2 family. Group II subfamily. D49 sub-subfamily. As to quaternary structure, heterodimer of A and B chains; non-covalently linked. The acidic protein (B chain) has phospholipase A2 activity and the A chain weakly inhibits the B chain enzymatic activity but potentiates its lethal potency. In terms of tissue distribution, expressed by the venom gland.

Its subcellular location is the secreted. It catalyses the reaction a 1,2-diacyl-sn-glycero-3-phosphocholine + H2O = a 1-acyl-sn-glycero-3-phosphocholine + a fatty acid + H(+). Its function is as follows. Heterodimer A-B: Sphenotoxin is a potent neurotoxin that possesses phospholipase A2 (PLA2) activity. It consists of a non-covalent association of a basic PLA2 subunit B with a non-enzymatic subunit A. In terms of biological role, monomer B: Not found in vivo. In vitro, potent neurotoxin that possesses phospholipase A2 (PLA2) activity and exerts a lethal action by blocking neuromuscular transmission. Induces paralysis of the hind legs and neuromuscular blockade in mouse phrenic nerve-diaphragm preparations. PLA2 catalyzes the calcium-dependent hydrolysis of the 2-acyl groups in 3-sn-phosphoglycerides. This Ophryacus sphenophrys (Broad-horned pitviper) protein is Basic phospholipase A2 sphenotoxin subunit B.